Consider the following 205-residue polypeptide: Molybdenum cofactor guanylyltransferase (205 aa).

GTP is bound by residues 14 to 16 (LAG), Lys-27, Asp-77, and Asp-107. Asp-107 serves as a coordination point for Mg(2+).

Belongs to the MobA family. In terms of assembly, monomer. Mg(2+) is required as a cofactor.

It is found in the cytoplasm. The enzyme catalyses Mo-molybdopterin + GTP + H(+) = Mo-molybdopterin guanine dinucleotide + diphosphate. Its function is as follows. Transfers a GMP moiety from GTP to Mo-molybdopterin (Mo-MPT) cofactor (Moco or molybdenum cofactor) to form Mo-molybdopterin guanine dinucleotide (Mo-MGD) cofactor. The sequence is that of Molybdenum cofactor guanylyltransferase from Burkholderia lata (strain ATCC 17760 / DSM 23089 / LMG 22485 / NCIMB 9086 / R18194 / 383).